The chain runs to 293 residues: Probable porphobilinogen deaminase (293 aa).

Cys-233 carries the post-translational modification S-(dipyrrolylmethanemethyl)cysteine.

The protein belongs to the HMBS family. Dipyrromethane serves as cofactor.

It carries out the reaction 4 porphobilinogen + H2O = hydroxymethylbilane + 4 NH4(+). It participates in porphyrin-containing compound metabolism; protoporphyrin-IX biosynthesis; coproporphyrinogen-III from 5-aminolevulinate: step 2/4. Its function is as follows. Tetrapolymerization of the monopyrrole PBG into the hydroxymethylbilane pre-uroporphyrinogen in several discrete steps. In Saccharolobus islandicus (strain Y.N.15.51 / Yellowstone #2) (Sulfolobus islandicus), this protein is Probable porphobilinogen deaminase.